We begin with the raw amino-acid sequence, 485 residues long: E3 ubiquitin-protein ligase RNF14 (485 aa).

The RWD domain occupies Asp11–Tyr137. The short motif at Arg37–Asn45 is the D-box element. A TRIAD supradomain region spans residues Lys217–Leu458. Residues Cys221, Cys224, Cys239, His241, Cys244, Cys247, Cys266, Cys271, Cys310, Cys315, Cys330, Cys333, Cys338, Cys341, and His346 each contribute to the Zn(2+) site. The segment at Cys221–Cys271 adopts an RING-type 1 zinc-finger fold. The IBR-type zinc-finger motif lies at Ala290–Cys351. The residue at position 349 (Ser349) is a Phosphoserine. Zn(2+) is bound by residues Cys351, Cys405, and Cys408. An RING-type 2; atypical zinc finger spans residues Cys405–Cys434. The active site involves Cys418. Positions 423, 426, 431, 434, 446, and 454 each coordinate Zn(2+).

Belongs to the RBR family. RNF14 subfamily. Interacts with GCN1; interaction takes place in response to ribosome collisions and is required for ubiquitination of EEF1A1/eEF1A. Interacts with the ubiquitin-conjugating enzymes UBE2E1 and UBE2E2. Interacts with AR/androgen receptor. Interacts with TCF7/TCF1, TCF7L1/TCF3 and TCF7L2/TCF4; promoting Wnt signaling. Post-translationally, RING-type zinc finger-dependent and UBE2E2-dependent autoubiquitination.

Its subcellular location is the cytoplasm. The protein localises to the nucleus. The catalysed reaction is [E2 ubiquitin-conjugating enzyme]-S-ubiquitinyl-L-cysteine + [acceptor protein]-L-lysine = [E2 ubiquitin-conjugating enzyme]-L-cysteine + [acceptor protein]-N(6)-ubiquitinyl-L-lysine.. The protein operates within protein modification; protein ubiquitination. In terms of biological role, E3 ubiquitin-protein ligase that plays a key role in the RNF14-RNF25 translation quality control pathway, a pathway that takes place when a ribosome has stalled during translation, and which promotes ubiquitination and degradation of translation factors on stalled ribosomes. Recruited to stalled ribosomes by the ribosome collision sensor GCN1 and mediates 'Lys-6'-linked ubiquitination of target proteins, leading to their degradation. Mediates ubiquitination of EEF1A1/eEF1A and ETF1/eRF1 translation factors on stalled ribosomes, leading to their degradation. Also catalyzes ubiquitination of ribosomal proteins RPL0, RPL1, RPL12, RPS13 and RPS17. Specifically required to resolve RNA-protein cross-links caused by reactive aldehydes, which trigger translation stress by stalling ribosomes: acts by catalying 'Lys-6'-linked ubiquitination of RNA-protein cross-links, leading to their removal by the ATP-dependent unfoldase VCP and subsequent degradation by the proteasome. Independently of its function in the response to stalled ribosomes, acts as a regulator of transcription in Wnt signaling via its interaction with TCF transcription factors (TCF7/TCF1, TCF7L1/TCF3 and TCF7L2/TCF4). May also play a role as a coactivator for androgen- and, to a lesser extent, progesterone-dependent transcription. The chain is E3 ubiquitin-protein ligase RNF14 from Mus musculus (Mouse).